Reading from the N-terminus, the 89-residue chain is Small ribosomal subunit protein uS15 (89 aa).

It belongs to the universal ribosomal protein uS15 family. As to quaternary structure, part of the 30S ribosomal subunit. Forms a bridge to the 50S subunit in the 70S ribosome, contacting the 23S rRNA.

Functionally, one of the primary rRNA binding proteins, it binds directly to 16S rRNA where it helps nucleate assembly of the platform of the 30S subunit by binding and bridging several RNA helices of the 16S rRNA. Forms an intersubunit bridge (bridge B4) with the 23S rRNA of the 50S subunit in the ribosome. This Anoxybacillus flavithermus (strain DSM 21510 / WK1) protein is Small ribosomal subunit protein uS15.